Reading from the N-terminus, the 123-residue chain is Phosphoribosyl-AMP cyclohydrolase (123 aa).

Asp-73 serves as a coordination point for Mg(2+). Zn(2+) is bound at residue Cys-74. Mg(2+) contacts are provided by Asp-75 and Asp-77. 2 residues coordinate Zn(2+): Cys-90 and Cys-97.

Belongs to the PRA-CH family. As to quaternary structure, homodimer. The cofactor is Mg(2+). Requires Zn(2+) as cofactor.

The protein resides in the cytoplasm. The enzyme catalyses 1-(5-phospho-beta-D-ribosyl)-5'-AMP + H2O = 1-(5-phospho-beta-D-ribosyl)-5-[(5-phospho-beta-D-ribosylamino)methylideneamino]imidazole-4-carboxamide. It functions in the pathway amino-acid biosynthesis; L-histidine biosynthesis; L-histidine from 5-phospho-alpha-D-ribose 1-diphosphate: step 3/9. Functionally, catalyzes the hydrolysis of the adenine ring of phosphoribosyl-AMP. This is Phosphoribosyl-AMP cyclohydrolase from Methanoregula boonei (strain DSM 21154 / JCM 14090 / 6A8).